The chain runs to 637 residues: Threonine--tRNA ligase (637 aa).

Residues 1–61 (MIKITLKDGK…NEDSTLEILT (61 aa)) enclose the TGS domain. The segment at 242–532 (DHRKLGKELG…LTEHYAGAFP (291 aa)) is catalytic. The Zn(2+) site is built by Cys-333, His-384, and His-509.

It belongs to the class-II aminoacyl-tRNA synthetase family. In terms of assembly, homodimer. Zn(2+) is required as a cofactor.

The protein resides in the cytoplasm. It catalyses the reaction tRNA(Thr) + L-threonine + ATP = L-threonyl-tRNA(Thr) + AMP + diphosphate + H(+). Its function is as follows. Catalyzes the attachment of threonine to tRNA(Thr) in a two-step reaction: L-threonine is first activated by ATP to form Thr-AMP and then transferred to the acceptor end of tRNA(Thr). Also edits incorrectly charged L-seryl-tRNA(Thr). The protein is Threonine--tRNA ligase of Clostridium novyi (strain NT).